The chain runs to 201 residues: Recombination protein RecR (201 aa).

The segment at 60–75 (CETCGNIDTRSPCTIC) adopts a C4-type zinc-finger fold. Positions 83-178 (SIIVVVADVA…KVTRLAHGVP (96 aa)) constitute a Toprim domain.

Belongs to the RecR family.

May play a role in DNA repair. It seems to be involved in an RecBC-independent recombinational process of DNA repair. It may act with RecF and RecO. The polypeptide is Recombination protein RecR (Nitrobacter winogradskyi (strain ATCC 25391 / DSM 10237 / CIP 104748 / NCIMB 11846 / Nb-255)).